A 535-amino-acid chain; its full sequence is CTP synthase (535 aa).

Residues 1–266 (MKFVVITGGV…GDYICERLGL (266 aa)) are amidoligase domain. S12 contributes to the CTP binding site. A UTP-binding site is contributed by S12. Residues 13–18 (GIGKGI) and D70 each bind ATP. Residues D70 and E140 each contribute to the Mg(2+) site. CTP contacts are provided by residues 147 to 149 (DIE), 187 to 192 (KTKPTQ), and K223. UTP contacts are provided by residues 187–192 (KTKPTQ) and K223. Residues 291 to 535 (RIAVVGKYVD…IKAAAGQGPD (245 aa)) form the Glutamine amidotransferase type-1 domain. G355 lines the L-glutamine pocket. The active-site Nucleophile; for glutamine hydrolysis is the C382. L-glutamine-binding positions include 383-386 (LGFQ), E406, and R464. Residues H508 and E510 contribute to the active site.

Belongs to the CTP synthase family. As to quaternary structure, homotetramer.

It carries out the reaction UTP + L-glutamine + ATP + H2O = CTP + L-glutamate + ADP + phosphate + 2 H(+). The catalysed reaction is L-glutamine + H2O = L-glutamate + NH4(+). The enzyme catalyses UTP + NH4(+) + ATP = CTP + ADP + phosphate + 2 H(+). It participates in pyrimidine metabolism; CTP biosynthesis via de novo pathway; CTP from UDP: step 2/2. With respect to regulation, allosterically activated by GTP, when glutamine is the substrate; GTP has no effect on the reaction when ammonia is the substrate. The allosteric effector GTP functions by stabilizing the protein conformation that binds the tetrahedral intermediate(s) formed during glutamine hydrolysis. Inhibited by the product CTP, via allosteric rather than competitive inhibition. In terms of biological role, catalyzes the ATP-dependent amination of UTP to CTP with either L-glutamine or ammonia as the source of nitrogen. Regulates intracellular CTP levels through interactions with the four ribonucleotide triphosphates. This chain is CTP synthase, found in Methanopyrus kandleri (strain AV19 / DSM 6324 / JCM 9639 / NBRC 100938).